Reading from the N-terminus, the 249-residue chain is Urease accessory protein UreG (249 aa).

The segment covering 1–13 (MHLGHEEFQRTDG) has biased composition (basic and acidic residues). Residues 1-34 (MHLGHEEFQRTDGRASTGPADAGPAGAGRAPRIG) are disordered. Residues 18-33 (GPADAGPAGAGRAPRI) show a composition bias toward low complexity. 37 to 44 (GPVGSGKT) is a binding site for GTP. The tract at residues 229–249 (PRGGSYDASDASNASQPLNRM) is disordered. A compositionally biased stretch (polar residues) spans 238–249 (DASNASQPLNRM).

Belongs to the SIMIBI class G3E GTPase family. UreG subfamily. In terms of assembly, homodimer. UreD, UreF and UreG form a complex that acts as a GTP-hydrolysis-dependent molecular chaperone, activating the urease apoprotein by helping to assemble the nickel containing metallocenter of UreC. The UreE protein probably delivers the nickel.

Its subcellular location is the cytoplasm. Its function is as follows. Facilitates the functional incorporation of the urease nickel metallocenter. This process requires GTP hydrolysis, probably effectuated by UreG. This Frankia casuarinae (strain DSM 45818 / CECT 9043 / HFP020203 / CcI3) protein is Urease accessory protein UreG.